Here is a 141-residue protein sequence, read N- to C-terminus: VLSAEDKANVKAVWSKLGGHGAEYGAEALGRMFESHPTTKTYPFHFDVSHGSAQVKGHGKKVADALATAASHLDDLPGALSALSDLHAHKLRVDPVNFKLLSHCLLVTLAAHHPAEFTPAAHASLDKFLASVSTVLTSKYR.

One can recognise a Globin domain in the interval 1 to 141; the sequence is VLSAEDKANV…VSTVLTSKYR (141 aa). Phosphoserine is present on S3. N6-succinyllysine occurs at positions 7 and 11. K16 carries the post-translational modification N6-acetyllysine; alternate. K16 bears the N6-succinyllysine; alternate mark. A Phosphotyrosine modification is found at Y24. S35 is modified (phosphoserine). K40 carries the post-translational modification N6-succinyllysine. Position 49 is a phosphoserine (S49). H58 is a binding site for O2. H87 is a heme b binding site. Position 102 is a phosphoserine (S102). T108 is subject to Phosphothreonine. Residues S124 and S131 each carry the phosphoserine modification. 2 positions are modified to phosphothreonine: T134 and T137. Phosphoserine is present on S138.

This sequence belongs to the globin family. As to quaternary structure, heterotetramer of two alpha chains and two beta chains. In terms of tissue distribution, red blood cells.

Its function is as follows. Involved in oxygen transport from the lung to the various peripheral tissues. The chain is Hemoglobin subunit alpha from Peromyscus crinitus (Canyon mouse).